A 234-amino-acid polypeptide reads, in one-letter code: Ribonuclease HII (234 aa).

An RNase H type-2 domain is found at 47 to 234 (IRIAGVDEVG…KTVHKILYQE (188 aa)). The a divalent metal cation site is built by D53, E54, and D144.

This sequence belongs to the RNase HII family. Mn(2+) serves as cofactor. The cofactor is Mg(2+).

It localises to the cytoplasm. It catalyses the reaction Endonucleolytic cleavage to 5'-phosphomonoester.. Functionally, endonuclease that specifically degrades the RNA of RNA-DNA hybrids. In Ruegeria pomeroyi (strain ATCC 700808 / DSM 15171 / DSS-3) (Silicibacter pomeroyi), this protein is Ribonuclease HII.